A 58-amino-acid polypeptide reads, in one-letter code: Large ribosomal subunit protein eL37 (58 aa).

Positions 1–17 (MTGAGTPSQGKKNTTTH) are enriched in polar residues. Residues 1–26 (MTGAGTPSQGKKNTTTHTKCRRCGEK) are disordered. Zn(2+)-binding residues include Cys20, Cys23, Cys35, and Cys38. The C4-type zinc-finger motif lies at 20–38 (CRRCGEKSYHTKKKVCSSC).

It belongs to the eukaryotic ribosomal protein eL37 family. Zn(2+) is required as a cofactor.

Its function is as follows. Binds to the 23S rRNA. The sequence is that of Large ribosomal subunit protein eL37 from Halobacterium salinarum (strain ATCC 29341 / DSM 671 / R1).